Consider the following 399-residue polypeptide: Homoserine O-acetyltransferase (399 aa).

The 310-residue stretch at 63–372 (NAILVCHALT…TDRGHDAFLL (310 aa)) folds into the AB hydrolase-1 domain. Residue S168 is the Nucleophile of the active site. A substrate-binding site is contributed by R238. Residues D334 and H367 contribute to the active site. D368 serves as a coordination point for substrate.

It belongs to the AB hydrolase superfamily. MetX family. Homodimer.

It is found in the cytoplasm. It carries out the reaction L-homoserine + acetyl-CoA = O-acetyl-L-homoserine + CoA. The protein operates within amino-acid biosynthesis; L-methionine biosynthesis via de novo pathway; O-acetyl-L-homoserine from L-homoserine: step 1/1. Functionally, transfers an acetyl group from acetyl-CoA to L-homoserine, forming acetyl-L-homoserine. The protein is Homoserine O-acetyltransferase of Nitrobacter hamburgensis (strain DSM 10229 / NCIMB 13809 / X14).